Consider the following 424-residue polypeptide: UPF0053 protein MG146 (424 aa).

The region spanning 6–191 is the CNNM transmembrane domain; that stretch reads SGLTLTVIIL…EQNGLFSKED (186 aa). A run of 4 helical transmembrane segments spans residues 7 to 27, 71 to 91, 101 to 121, and 135 to 155; these read GLTLTVIILSIILLAFISTVV, LITILITNNIVAIMVSNILFL, LLSSVLNLVVSGVLIVSFCEI, and LVLFAYLVYFFYLIFWPITKL. CBS domains follow at residues 210–270 and 272–332; these read MIKW…PKSL and LNQL…IYDE.

This sequence belongs to the UPF0053 family.

It localises to the cell membrane. The protein is UPF0053 protein MG146 of Mycoplasma genitalium (strain ATCC 33530 / DSM 19775 / NCTC 10195 / G37) (Mycoplasmoides genitalium).